Here is a 255-residue protein sequence, read N- to C-terminus: Tabinhibitin 2 (255 aa).

A signal peptide spans 1-23 (MISILVSRFLLAALVLQYATIDA). Residues 32 to 34 (RGD) carry the Cell attachment site motif. Residues 67–211 (LSKINDVRDH…KARALLTCNF (145 aa)) enclose the SCP domain.

It belongs to the CRISP family. In terms of tissue distribution, expressed in salivary glands.

Its subcellular location is the secreted. Its function is as follows. Inhibits platelet aggregation induced by all agonists tested (ADP, arachidonic acid, the thromboxane A2 analog U46619, thrombin, and snake venom snaclecs (TMVA that activates platelet through GPIB, and stejnulxin that specifically acts through GPVI (GP6))). May act by competing with fibrinogen for binding to glycoprotein IIb/IIIa (ITGA2B/ITGB3). The protein is Tabinhibitin 2 of Tabanus yao (Horsefly).